The sequence spans 216 residues: MAVAPARARSDYDYLIKLLLIGDSGVGKSCLLLRFSDDTFTTSFITTIGIDFKIRTVELDGKRIKLQIWDTAGQERFRTITTAYYRGAMGILLVYDVTDESSFNNIRNWMKNIEQHASDNVNKILVGNKADMDESKRAVPTAKGQALADEYGIKFFETSAKTNLNVENVFMSIAKDIKQRLTETDTKAEPQGIKITKQDTAASSSTAEKSACCSYV.

22-29 (GDSGVGKS) is a binding site for GTP. An Effector region motif is present at residues 44 to 52 (FITTIGIDF). GTP contacts are provided by residues 70-74 (DTAGQ), 128-131 (NKAD), and 159-160 (SA). Positions 196–216 (TKQDTAASSSTAEKSACCSYV) are disordered. The span at 200–216 (TAASSSTAEKSACCSYV) shows a compositional bias: low complexity. 2 S-geranylgeranyl cysteine lipidation sites follow: Cys212 and Cys213.

Belongs to the small GTPase superfamily. Rab family. Interacts with PI5K2.

It is found in the golgi apparatus membrane. The protein localises to the cell membrane. Its function is as follows. Involved in membrane trafficking from the Golgi to the plasma membrane. This Arabidopsis thaliana (Mouse-ear cress) protein is Ras-related protein RABE1d (RABE1D).